The sequence spans 213 residues: MOB kinase activator-like 1 homolog A (213 aa).

Zn(2+) contacts are provided by Cys-77, Cys-82, His-159, and His-164.

It belongs to the MOB1/phocein family.

The chain is MOB kinase activator-like 1 homolog A (mobA) from Dictyostelium discoideum (Social amoeba).